The chain runs to 432 residues: MASSSELSLDCKPQSYSMLLKSFGDNFQSDPTTHKLEDLLSRLEQERLKIDAFKRELPLCMQLLNNAVEVYKQQLEAYRANSNNNNQSVGTRPVLEEFIPLRNQPEKTNNKGSNWMTTAQLWSQSETKPKNIDSTTDQSLPKDEINSSPKLGHFDAKQRNGSGAFLPFSKEQSLPELALSTEVKRVSPTNEHTNGQDGNDESMINNDNNYNNNNNNNSNSNGVSSTTSQSNRKARRCWSPDLHRRFVQALQMLGGSQVATPKQIRELMKVDGLTNDEVKSHLQKYRLHTRRPSPSPQTSGGPGPHLVVLGGIWVPPEYTSAHGGTPTLYHHQVHHHHTNTAGPPPPHFCSSQEFYTTPPPPQPLHHHHFQTFNGSSGGTASTDSTHHQVTDSPTVEGKSPESGGGERKGLAALREECEDHSNINGSEITLKF.

Positions 36-81 form a coiled coil; that stretch reads LEDLLSRLEQERLKIDAFKRELPLCMQLLNNAVEVYKQQLEAYRAN. Polar residues-rich tracts occupy residues 123-139 and 187-197; these read SQSE…TDQS and SPTNEHTNGQD. The disordered stretch occupies residues 123–237; sequence SQSETKPKNI…SQSNRKARRC (115 aa). The span at 201–231 shows a compositional bias: low complexity; sequence ESMINNDNNYNNNNNNNSNSNGVSSTTSQSN. The 61-residue stretch at 230-290 folds into the HTH myb-type domain; sequence SNRKARRCWS…HLQKYRLHTR (61 aa). The segment at residues 261–286 is a DNA-binding region (H-T-H motif); the sequence is PKQIRELMKVDGLTNDEVKSHLQKYR. The tract at residues 354–412 is disordered; sequence FYTTPPPPQPLHHHHFQTFNGSSGGTASTDSTHHQVTDSPTVEGKSPESGGGERKGLAA.

Interacts with JMJ30, but not with SVP, FLC or CO. Specifically expressed in vascular tissues of cotyledons, rosette leaves and cauline leaves. Not detected in the vegetative shoot apical meristem.

Its subcellular location is the nucleus. Functionally, transcription factor acting as a flowering repressor, directly repressing FT expression in a dosage-dependent manner in the leaf vasculature. The sequence is that of Myb family transcription factor EFM from Arabidopsis thaliana (Mouse-ear cress).